A 61-amino-acid chain; its full sequence is Large ribosomal subunit protein eL24 (61 aa).

Zn(2+) is bound by residues cysteine 7, cysteine 10, cysteine 33, and cysteine 37. The C4-type zinc-finger motif lies at 7-37; sequence CSFCGHEIPPGTGLMYVRNDGTMLWFCSSKC.

The protein belongs to the eukaryotic ribosomal protein eL24 family. Part of the 50S ribosomal subunit. Forms a cluster with proteins L3 and L14. The cofactor is Zn(2+).

Its function is as follows. Binds to the 23S rRNA. This is Large ribosomal subunit protein eL24 from Saccharolobus islandicus (strain M.16.27) (Sulfolobus islandicus).